The chain runs to 1099 residues: Contactin-5 (1099 aa).

The N-terminal stretch at 1–18 (MASSWRLILFLSFTSCLS) is a signal peptide. 6 consecutive Ig-like C2-type domains span residues 99–190 (PVFV…ATLQ), 196–282 (NFSG…RVLS), 300–385 (PKIE…GQLQ), 390–474 (PHWV…AELK), 480–569 (PSFE…VSVK), and 571–660 (PTRI…DSVS). A disulfide bridge connects residues Cys123 and Cys173. N-linked (GlcNAc...) asparagine glycans are attached at residues Asn138 and Asn196. 2 disulfides stabilise this stretch: Cys217-Cys269 and Cys322-Cys369. N-linked (GlcNAc...) asparagine glycosylation is found at Asn397, Asn449, and Asn540. 3 disulfide bridges follow: Cys411/Cys458, Cys503/Cys551, and Cys593/Cys650. 4 consecutive Fibronectin type-III domains span residues 673 to 771 (PPGV…TNEA), 776 to 873 (APSN…SAEG), 878 to 972 (APTD…TKRH), and 977 to 1067 (PPGN…SYAG). Residues Asn779, Asn816, and Asn931 are each glycosylated (N-linked (GlcNAc...) asparagine). The tract at residues 958–983 (YGPPSREVSATTKRHPPSEPPGNLRW) is disordered. Asn1002 carries N-linked (GlcNAc...) asparagine glycosylation. Ser1072 carries GPI-anchor amidated serine lipidation. The propeptide at 1073-1099 (AQSTLHSLSKWSSVTLLLALMLPSSSW) is removed in mature form.

Belongs to the immunoglobulin superfamily. Contactin family. As to quaternary structure, interacts with PTPRG. In terms of tissue distribution, specifically expressed in the nervous system. Expressed in cerebrum and cerebellum but at low level in spinal cord. In brain, it is expressed in highly restricted regions at postnatal day 7, such as the auditory pathway, including the cochlear nucleus, superior olive, inferior colliculus, medial geniculate nucleus and auditory cortex. Expressed in the accessory olfactory bulb, glomerular and mitral cell layers in the olfactory bulb, anterior thalamic nuclei, layers II-IV of the cerebral cortex, dentate gyrus of the hippocampus and external granule cells and Purkinje cells of the cerebellum. Also expressed in the piriform cortex, inferior olive and facial nucleus. Weakly or not expressed in other parts of the brain.

The protein resides in the cell membrane. Functionally, contactins mediate cell surface interactions during nervous system development. Has some neurite outgrowth-promoting activity in the cerebral cortical neurons but not in hippocampal neurons. Probably involved in neuronal activity in the auditory system. The polypeptide is Contactin-5 (Cntn5) (Rattus norvegicus (Rat)).